Reading from the N-terminus, the 690-residue chain is MAKKKSEEHSGTDANDSDYQEEPNFDDPPGFVDNISDEDLLGDMLAQRPSEADGVESVVVVDNIPKVEPVRLEKLKLVINKLFSNYGEIVNVVYPVDEEGKTKGYAFMEYKQARQAEEAVKKLNNHRLDKNHTFAVNLFTDFQKYENIPEKWEPPTVQTFKVQSDLYNFINDPDTYDQYCVAAETAPNCVQVGFWQNVLPEPFELETRERFTDTFVKWSPLGTYVVTFHKPGVAIWGGSSFQKIQKFPHPGTQFVEFSPCENYLVTYGPTPTGQKIIIWDIRTGAEKRSFVADGMSVLSMFRWSHDDKFVARMGENSIHIYETPSFYLLDLKSIKIPGIRGFSWSPTDNVIAYWVEEQNQIPARVTLMEIPKKREIRNKNLFHVADCKLHWQKSGDYLCVKVDRYSKLKKDKKDLDVKFLGMFYNFEIFHMREKEIPVDSVEIRELILAFAWEPVGNKFSIIHGETNSSNVSFYEVNKGVKPSLVKRLEKKSCTHLFWSPRGQFIVMANLTMGTFEFVDSTNDYIITASPDHFRASEVEWDPTGRYVVTGVSSWKVKEDTGFNMYTFQGRIIKRTILKNFVQFLWRPRPPTLLSEEKQKEIKKNLKKYYAAFEQKDRLRLTRASKELLEKRSQLRETFMEYRNKRIAEWAEQKSRRIMLRGHVDTDNLETDEVDEEIVEFLVKEEVTLLE.

Residues 1–11 show a composition bias toward basic and acidic residues; that stretch reads MAKKKSEEHSG. The segment at 1-33 is disordered; sequence MAKKKSEEHSGTDANDSDYQEEPNFDDPPGFVD. Over residues 15-25 the composition is skewed to acidic residues; that stretch reads NDSDYQEEPNF. One can recognise an RRM domain in the interval 57-141; the sequence is SVVVVDNIPK…HTFAVNLFTD (85 aa). WD repeat units follow at residues 207–246, 293–331, 334–369, 442–484, and 530–575; these read TRER…KIQK, DGMS…LLDL, IKIP…TLME, EIRE…KPSL, and PDHF…IKRT. The stretch at 595–645 forms a coiled coil; that stretch reads EEKQKEIKKNLKKYYAAFEQKDRLRLTRASKELLEKRSQLRETFMEYRNKR.

It belongs to the eIF-3 subunit B family. As to quaternary structure, component of the eukaryotic translation initiation factor 3 (eIF-3) complex. The eIF-3 complex interacts with pix. Interacts with mxt.

Its subcellular location is the cytoplasm. RNA-binding component of the eukaryotic translation initiation factor 3 (eIF-3) complex, which is involved in protein synthesis of a specialized repertoire of mRNAs and, together with other initiation factors, stimulates binding of mRNA and methionyl-tRNAi to the 40S ribosome. The eIF-3 complex specifically targets and initiates translation of a subset of mRNAs involved in cell proliferation. The protein is Eukaryotic translation initiation factor 3 subunit B of Drosophila melanogaster (Fruit fly).